Here is a 727-residue protein sequence, read N- to C-terminus: MSVLPDRQVINQIISGHYADPFSVLGMHQTERGLQVCALLPDAQEVWLIDTKTGRRVAQLDCEDPRGFFAVQLTRRKNPFRYQFAVTWQESTQIIEDPYRFGTLLQDIDTWLLAEGTHLRPYERLGAHLMSLDEVPGVSFAVWAPNAQRVSVVGEFNFWDGRRHPMRLRRENGIWELFLPGVQAGQLYKFEIIDCHGQVRLKADPYAFKAQMRPETASLISPLPDVVENTPARQKANDLRSPISIYEVHLGSWRRHTDNNFWLSYGELADQLVEYVKYMGFTHVELLPINEHPFDGSWGYQPLGLYAPTRRFGTPQDFKDFVAKFHEAGINVILDWVPGHFPSDEHGLSTFDGTALYEYADPREGYHQDWNTLIYNYGRNEVRNYLAGNAFYWMERFGIDALRIDAVASMIYRDYSRAEGQWVPNYYGGRENLEAIAFLRYTNHTIGVERPGGVTMAEESTDFPGVTLPPDAGGLGFNYKWNMGWMHDTLNYMQCDPVHRKYHHNLMTFGMLYAYTENFILPISHDEVVHGKRSVLDRMPGDAWQKFANLRAYYGFMWAHPGKKLLFMGCEFAQGREWNFDTSLDWHLLDDENGWHKGVQRWVRDLNHCYQQYAPLYELDYQPAGFEWLVVDDHENSVFAFLRRDADGNELIVISNFTPVPRYNYRVGVPQSGHYREVLNSDSAFYRGSNMGNQGGIHSHPVSSHNHAHSLLLTLPPLSTIYLTRGG.

D405 serves as the catalytic Nucleophile. Residue E458 is the Proton donor of the active site.

Belongs to the glycosyl hydrolase 13 family. GlgB subfamily. As to quaternary structure, monomer.

It catalyses the reaction Transfers a segment of a (1-&gt;4)-alpha-D-glucan chain to a primary hydroxy group in a similar glucan chain.. It functions in the pathway glycan biosynthesis; glycogen biosynthesis. Its function is as follows. Catalyzes the formation of the alpha-1,6-glucosidic linkages in glycogen by scission of a 1,4-alpha-linked oligosaccharide from growing alpha-1,4-glucan chains and the subsequent attachment of the oligosaccharide to the alpha-1,6 position. The protein is 1,4-alpha-glucan branching enzyme GlgB of Yersinia enterocolitica serotype O:8 / biotype 1B (strain NCTC 13174 / 8081).